A 587-amino-acid chain; its full sequence is Glutaconyl-CoA decarboxylase subunit alpha (587 aa).

Residues 31–298 (LKKIEEEIHQ…YDPEFFRVDD (268 aa)) enclose the CoA carboxyltransferase N-terminal domain. Residues 31-558 (LKKIEEEIHQ…RGYVEAFTEA (528 aa)) are carboxyltransferase. One can recognise a CoA carboxyltransferase C-terminal domain in the interval 295 to 558 (RVDDPKAPAF…RGYVEAFTEA (264 aa)).

Heterooctamer consisting of two alpha, two beta, two gamma and two delta subunits.

The enzyme catalyses (2E)-glutaconyl-CoA + Na(+)(in) + H(+) = (2E)-butenoyl-CoA + Na(+)(out) + CO2. Its pathway is amino-acid degradation; L-glutamate degradation via hydroxyglutarate pathway; crotonoyl-CoA from L-glutamate: step 5/5. Its function is as follows. Decarboxylase subunit of the primary sodium pump glutaconyl-CoA decarboxylase (GCD). The sequence is that of Glutaconyl-CoA decarboxylase subunit alpha (gcdA) from Acidaminococcus fermentans (strain ATCC 25085 / DSM 20731 / CCUG 9996 / CIP 106432 / VR4).